The following is a 304-amino-acid chain: Ribosomal protein L11 methyltransferase (304 aa).

The S-adenosyl-L-methionine site is built by T147, G168, D190, and N238.

It belongs to the methyltransferase superfamily. PrmA family.

It is found in the cytoplasm. The catalysed reaction is L-lysyl-[protein] + 3 S-adenosyl-L-methionine = N(6),N(6),N(6)-trimethyl-L-lysyl-[protein] + 3 S-adenosyl-L-homocysteine + 3 H(+). Its function is as follows. Methylates ribosomal protein L11. The polypeptide is Ribosomal protein L11 methyltransferase (Prochlorococcus marinus (strain SARG / CCMP1375 / SS120)).